The following is a 507-amino-acid chain: Putative UDP-glucuronosyltransferase ugt-60 (507 aa).

The signal sequence occupies residues 1-15 (MYLPIFCIFLSVVDS). N-linked (GlcNAc...) asparagine glycosylation occurs at N312. The chain crosses the membrane as a helical span at residues 379 to 399 (YNSFLEAAQAGIPAVLMPLFA).

This sequence belongs to the UDP-glycosyltransferase family.

It localises to the membrane. It carries out the reaction glucuronate acceptor + UDP-alpha-D-glucuronate = acceptor beta-D-glucuronoside + UDP + H(+). This is Putative UDP-glucuronosyltransferase ugt-60 (ugt-60) from Caenorhabditis elegans.